Here is a 486-residue protein sequence, read N- to C-terminus: Ribosomal RNA small subunit methyltransferase F (486 aa).

Residues alanine 124 to lysine 130, glutamate 148, aspartate 175, and aspartate 193 each bind S-adenosyl-L-methionine. The active-site Nucleophile is cysteine 246.

This sequence belongs to the class I-like SAM-binding methyltransferase superfamily. RsmB/NOP family.

The protein resides in the cytoplasm. The enzyme catalyses cytidine(1407) in 16S rRNA + S-adenosyl-L-methionine = 5-methylcytidine(1407) in 16S rRNA + S-adenosyl-L-homocysteine + H(+). Specifically methylates the cytosine at position 1407 (m5C1407) of 16S rRNA. This Shewanella baltica (strain OS223) protein is Ribosomal RNA small subunit methyltransferase F.